We begin with the raw amino-acid sequence, 268 residues long: MKKQFLVRKNSSNSRYLRRDCVICLQKDGLRAQLSPCGHDQFDYSCICRWMDQSLTCPICKRHVDCVFYGFHGSSLYKKWYTQSLGSNQYSISRQLLRQPSFSSSENTDRLADLLRVRRFIYQKAWKSYENPSLSSHRQYQIPTPIQLASSASLLKKVESFIAKELLLFEYLDGHQINFIQIFLMGLLRVQNIQHPQTIDELAEFIGHEESSILLHELQRYLQFRPLSISSYLYSKRYLYGPEGLTMVQLLSQIENIQHESGPETENS.

An RING-type; degenerate zinc finger spans residues 21 to 61 (CVICLQKDGLRAQLSPCGHDQFDYSCICRWMDQSLTCPICK).

The protein resides in the mitochondrion. Its subcellular location is the nucleus. This is an uncharacterized protein from Schizosaccharomyces pombe (strain 972 / ATCC 24843) (Fission yeast).